The chain runs to 188 residues: D-glycero-beta-D-manno-heptose-1,7-bisphosphate 7-phosphatase (188 aa).

Residue D11 is the Nucleophile of the active site. Mg(2+) contacts are provided by D11 and D13. Substrate is bound by residues 11–13, 19–22, and 53–56; these read DRD, DHGY, and TNQS. Catalysis depends on D13, which acts as the Proton donor. Residues C92, H94, C107, and C109 each coordinate Zn(2+). Substrate is bound at residue 110–111; the sequence is RK. Mg(2+) contacts are provided by D136 and K137. A substrate-binding site is contributed by K137.

This sequence belongs to the GmhB family. As to quaternary structure, monomer. Mg(2+) serves as cofactor. Requires Zn(2+) as cofactor.

The protein resides in the cytoplasm. It catalyses the reaction D-glycero-beta-D-manno-heptose 1,7-bisphosphate + H2O = D-glycero-beta-D-manno-heptose 1-phosphate + phosphate. It participates in nucleotide-sugar biosynthesis; ADP-L-glycero-beta-D-manno-heptose biosynthesis; ADP-L-glycero-beta-D-manno-heptose from D-glycero-beta-D-manno-heptose 7-phosphate: step 2/4. It functions in the pathway bacterial outer membrane biogenesis; LPS core biosynthesis. Functionally, converts the D-glycero-beta-D-manno-heptose 1,7-bisphosphate intermediate into D-glycero-beta-D-manno-heptose 1-phosphate by removing the phosphate group at the C-7 position. This is D-glycero-beta-D-manno-heptose-1,7-bisphosphate 7-phosphatase (gmhB) from Yersinia pestis.